We begin with the raw amino-acid sequence, 343 residues long: Pseudaminic acid synthase (343 aa).

In terms of domain architecture, AFP-like spans 287-343 (SLYASKDIKKGEMFSEENVKSVRPSFGLHPKFYQELLGKKASKDIKFGDALKQGDFQ).

The protein belongs to the pseudaminic acid synthase family. It depends on a divalent metal cation as a cofactor.

The catalysed reaction is 2,4-diacetamido-2,4,6-trideoxy-beta-L-altrose + phosphoenolpyruvate + H2O = pseudaminate + phosphate. In terms of biological role, catalyzes the fifth step in the biosynthesis of pseudaminic acid, a sialic-acid-like sugar that is used to modify flagellin. Catalyzes the condensation of phosphoenolpyruvate with 2,4-diacetamido-2,4,6-trideoxy-beta-l-altropyranose, forming pseudaminic acid. In Campylobacter jejuni subsp. jejuni serotype O:2 (strain ATCC 700819 / NCTC 11168), this protein is Pseudaminic acid synthase (pseI).